We begin with the raw amino-acid sequence, 760 residues long: MSTAAAARPVAGTGLREKTAASLVNSFRLASVTQRLRYHIQDGAKVDPKEFQICCISFAKGIDFAIANNDIPKKVEEFPWLLKQLCRHGTDVYTKTALMVLMISVKHACHLGWFSDSESQELIALADEIRTCFGSSGSTSPGIKSPGSTFSQIMERFYPFVKLGHVLVSFEVKAGYTMLAHDFYISKNMPHSLQEKIRLFVAQTDNIDTSACISNPPEVSFLLNGKGVEKRVNIAMDTGPQLPTNVTAQLKYGTNLLQVMGNFKGNYIIIIAFTGLVVPPEKPVLKDYLQSGVIEASPDSDIIEGPSRVSLSCPISRKRIKLPVKGQLCKHLQCFDFSNYVHINMRNPTWRCPHCNQPVCYPDIRLDQNMAKILKDVEHNAADVIIDAGGTWKVTKNTGETPEPVREIIHDLEDPMSLLNSGPVVFDLTGDDDAELEVFGDNKVEDRKPCMSDAQGQSNNNNTNKHPSNDDYSSIFDISDVIALDPEILSALGNTAPQPHQASNTGTGQQYSNLSQIPMSIDPMPVPVPFSQTPSPRDRPATTSTVFTIPNPSPQYSQVHASPVTPTGTYLGRTTSPRWNQTYQSQAPPMTTPYTSRKVSVPVTSQSPANVSSFVQSQHVPRVLSQPNNYGVRGLTSSHASTSRQHPSGPTVQSVSRLSDLVDVDLTVPDTSNWRPRMRGSLVPGSHSTALDHMIIRPSQQSQTSTRLNSSQPVQTPSVQTSQAQSPFTTAAYRTETVLGNRNHPVPAPPGIVRPTGPTS.

Residues isoleucine 143–aspartate 301 form an interacting domain (IND), required for interaction with MOM1 and PIAL1 region. Residues proline 298–histidine 379 form an SP-RING-type zinc finger. Positions 329, 331, 352, and 355 each coordinate Zn(2+). A compositionally biased stretch (basic and acidic residues) spans glycine 440 to cysteine 450. 4 disordered regions span residues glycine 440–aspartate 471, leucine 492–aspartate 522, glycine 631–arginine 657, and serine 699–serine 760. Polar residues-rich tracts occupy residues leucine 492–proline 518, glycine 631–glutamine 653, and serine 699–threonine 729.

The protein belongs to the PIAL protein ligase family. As to quaternary structure, homodimer. Interacts with MOM1 and PIAL1 to form a high molecular mass complex which mediates transcriptional silencing at heterochromatin regions. Expressed in leaves, stems and flowers, and, at low levels, in siliques and old leaves.

The protein localises to the nucleus. It functions in the pathway protein modification; protein sumoylation. Its function is as follows. Together with MOM1 and PIAL1, regulates transcriptional gene silencing (TGS) independently of changes in DNA methylation. E4-type SUMO ligase that promotes SUMO chain formation in a SCE1-dependent manner and thus contributes to a pathway for proteolytic removal of sumoylation substrates. Involved in stress responses and sulfur metabolism. The sequence is that of E4 SUMO-protein ligase PIAL2 from Arabidopsis thaliana (Mouse-ear cress).